The primary structure comprises 378 residues: MGGDKENLDLSDLNASLPAAAAALSAEDRAGLVNALKDKLQSLAGQHTDVLEALSPNVRKRVEYLREIQGQHDEIELKFFEERAALEAKYQKLYEPLYTKRYNIVNGVVEVDGGNDEPASENAAEGKDADAKGVPDFWLTAMKTNEVLSEEIQERDEPALKYLKDIKWARIDDPKGFKLDFFFDTNPFFKNSVLTKTYHMVDEDEPILEKAIGTEIEWYPGKNLTQKILKKKPKKGSKNAKPITKTEVCESFFNFFSPPQVPDDDEDIDEDTADELQGQMEHDYDIGTTIRDKIIPHAVSWFTGEAVQAEDFDDMEDDEEDDEDDDEDEEEEEEDEDEDEDDEEEKSKPKKKSAGKPKLPSKGGAQGGADQPADCKQQ.

A coiled-coil region spans residues 33-87; it reads VNALKDKLQSLAGQHTDVLEALSPNVRKRVEYLREIQGQHDEIELKFFEERAALE. Positions 54-69 match the Nuclear export signal motif; that stretch reads LSPNVRKRVEYLREIQ. The short motif at 230–235 is the Nuclear localization signal element; sequence KKKPKK. Residues 306-378 are disordered; sequence AVQAEDFDDM…ADQPADCKQQ (73 aa). The span at 308–344 shows a compositional bias: acidic residues; sequence QAEDFDDMEDDEEDDEDDDEDEEEEEEDEDEDEDDEE. Positions 348–352 match the Nuclear localization signal motif; that stretch reads KPKKK. Residues 356 to 378 show a composition bias toward low complexity; the sequence is KPKLPSKGGAQGGADQPADCKQQ. C375 is modified (cysteine methyl ester). A lipid anchor (S-farnesyl cysteine) is attached at C375. The propeptide at 376–378 is removed in mature form; it reads KQQ.

This sequence belongs to the nucleosome assembly protein (NAP) family.

It localises to the nucleus. The protein localises to the cytoplasm. Functionally, may modulate chromatin structure by regulation of nucleosome assembly/disassembly. This Oryza sativa subsp. japonica (Rice) protein is Nucleosome assembly protein 1;1 (NAP1;1).